The following is a 287-amino-acid chain: Rhodopsin (287 aa).

The Extracellular segment spans residues 1-5; the sequence is VNGAA. A helical transmembrane segment spans residues 6–30; it reads YAGLCAYMFLLILVGFPVNFLTLYV. Topologically, residues 31 to 42 are cytoplasmic; it reads TLEHKKLRTPLN. Residues 43–65 form a helical membrane-spanning segment; the sequence is YILLNLAVADLFMVLGGFTTTMY. The Extracellular portion of the chain corresponds to 66–79; the sequence is TSAHGYFVLGRLGC. An intrachain disulfide couples C79 to C156. The chain crosses the membrane as a helical span at residues 80–102; the sequence is NVEGFFATLGGEIALWSLVVLAV. A 'Ionic lock' involved in activated form stabilization motif is present at residues 103–105; sequence ERW. The Cytoplasmic portion of the chain corresponds to 103–121; it reads ERWIVVCKPISNFRFTEEH. Residues 122–142 traverse the membrane as a helical segment; that stretch reads AIMGLGFNWVMASACAVPPLV. The Extracellular portion of the chain corresponds to 143 to 171; sequence GWSRYIPEGMQCSCGINYYTRSEGFNNES. N-linked (GlcNAc...) asparagine glycosylation occurs at N169. A helical transmembrane segment spans residues 172–193; sequence LVMKMLICHFLIPLFVIFFCYG. The Cytoplasmic segment spans residues 194–221; the sequence is RMLCAVKEAAAAQQESETTQRAEREVSR. The chain crosses the membrane as a helical span at residues 222–243; it reads MVVIMVISFLVCWLPYASVAWY. Topologically, residues 244–255 are extracellular; sequence IFCNQGSEFGPV. The helical transmembrane segment at 256–277 threads the bilayer; sequence FMTLPAFFAKSASIYNPLIYIC. Residue K265 is modified to N6-(retinylidene)lysine. Topologically, residues 278-287 are cytoplasmic; it reads MNKHSRHCMI.

The protein belongs to the G-protein coupled receptor 1 family. Opsin subfamily. Post-translationally, phosphorylated on some or all of the serine and threonine residues present in the C-terminal region. In terms of processing, contains one covalently linked retinal chromophore.

Its subcellular location is the membrane. The protein resides in the cell projection. The protein localises to the cilium. It is found in the photoreceptor outer segment. Its function is as follows. Photoreceptor required for image-forming vision at low light intensity. While most salt water fish species use retinal as chromophore, most freshwater fish use 3-dehydroretinal, or a mixture of retinal and 3-dehydroretinal. Light-induced isomerization of 11-cis to all-trans retinal triggers a conformational change that activates signaling via G-proteins. Subsequent receptor phosphorylation mediates displacement of the bound G-protein alpha subunit by arrestin and terminates signaling. The protein is Rhodopsin (rho) of Taurulus bubalis (Long-spined sea scorpion).